We begin with the raw amino-acid sequence, 222 residues long: Latexin (222 aa).

The 97-residue stretch at 1–97 (MEIPPTNYPA…NFTFEGETGK (97 aa)) folds into the Cystatin LXN-type 1 domain. Lys-55 bears the N6-acetyllysine mark. The segment at 98–117 (NPDEEDNTFYQRLKSMKEPL) is alpha-helical linker. Positions 118–222 (EAQNIPDNFG…SRLPKEVQLE (105 aa)) constitute a Cystatin LXN-type 2 domain.

This sequence belongs to the protease inhibitor I47 (latexin) family. Highly expressed in heart, prostate, ovary, kidney, pancreas, and colon, moderate or low in other tissues including brain.

Its subcellular location is the cytoplasm. Its function is as follows. Hardly reversible, non-competitive, and potent inhibitor of CPA1, CPA2 and CPA4. May play a role in inflammation. The polypeptide is Latexin (LXN) (Homo sapiens (Human)).